The following is a 364-amino-acid chain: Transcription factor TGA4 (364 aa).

The tract at residues 39 to 79 (PGSIIIPTNEKPDSLSEDTSHGTEGTPHKFDQEASTSRHPD) is disordered. Basic and acidic residues predominate over residues 48–79 (EKPDSLSEDTSHGTEGTPHKFDQEASTSRHPD). Residues 78-141 (PDKIQRRLAQ…NGVDTNALSF (64 aa)) enclose the bZIP domain. Coiled-coil stretches lie at residues 79-127 (DKIQ…RQQG) and 257-277 (NLRQSCQQAEDALSQGMEKLQ). The segment at 80-100 (KIQRRLAQNREAARKSRLRKK) is basic motif. The tract at residues 106-120 (LETSRLKLIHLEQEL) is leucine-zipper. Residues 149–359 (IVAFEMEYGH…RALSSSWAAR (211 aa)) enclose the DOG1 domain. Cysteine 256 and cysteine 262 are oxidised to a cystine.

It belongs to the bZIP family. As to quaternary structure, binds DNA as a dimer. Interaction with the Dof domain proteins OBP1, OBP2 or OBP3 enhances the binding to the ocs element. Interacts with RAP2-3/EPB, an ethylene-responsive element binding protein. The reduced form interacts with NPR1. As to expression, predominantly expressed in roots.

The protein resides in the nucleus. Functionally, transcriptional activator that binds specifically to the DNA sequence 5'-TGACG-3'. Recognizes ocs elements like the as-1 motif of the cauliflower mosaic virus 35S promoter. Binding to the as-1-like cis elements mediate auxin- and salicylic acid-inducible transcription. May be involved in the induction of the systemic acquired resistance (SAR) via its interaction with NPR1. Could also bind to the Hex-motif (5'-TGACGTGG-3') another cis-acting element found in plant histone promoters. This chain is Transcription factor TGA4 (TGA4), found in Arabidopsis thaliana (Mouse-ear cress).